A 2179-amino-acid polypeptide reads, in one-letter code: Genome polyprotein (2179 aa).

Disordered stretches follow at residues 503–531 (FSKD…PTGD), 623–678 (QPQK…YPIQ), 703–738 (RAKK…GDQF), and 753–847 (EPSV…PPKM). Polar residues-rich tracts occupy residues 630-642 (DTPS…QPFH) and 659-678 (TTFA…YPIQ). Positions 758–770 (SEDTSSQSYISTE) are enriched in polar residues. A compositionally biased stretch (low complexity) spans 783-806 (SEESTQLSQLSSSSNDSPENNENT). Positions 819 to 831 (EISEVEDEVDGMT) are enriched in acidic residues. A CCHC-type zinc finger spans residues 1112-1125 (CFTCGKIGHFSRNC). The active-site For protease activity; shared with dimeric partner is the Asp1226. The Reverse transcriptase domain maps to 1409-1591 (QQFDLIEPSD…NKIQFLGMDF (183 aa)). Mg(2+) contacts are provided by Asp1479, Asp1542, and Asp1543. 3 disordered regions span residues 1822 to 1848 (QRRT…KLSH), 2114 to 2144 (NIVK…KNKC), and 2160 to 2179 (YSTK…EPCV). The segment covering 1827–1840 (SSSTKSKADSSQST) has biased composition (low complexity). A compositionally biased stretch (basic residues) spans 2120–2144 (PRKRKGKAKSRSSTRSEKRRAKNKC). The segment covering 2162–2179 (TKPSTPSWTQDSSSEPCV) has biased composition (polar residues).

The protein belongs to the Petuviruses genome polyprotein family.

The enzyme catalyses DNA(n) + a 2'-deoxyribonucleoside 5'-triphosphate = DNA(n+1) + diphosphate. In terms of biological role, encodes presumably for at least four polypeptides: Movement protein (MP), capsid protein (CP), Protease (PR), and reverse transcriptase (RT). This chain is Genome polyprotein, found in Petunia vein clearing virus (isolate Shepherd) (PVCV).